The chain runs to 148 residues: Putative nickel-responsive regulator (148 aa).

Residues histidine 88, histidine 99, histidine 101, and cysteine 107 each coordinate Ni(2+).

The protein belongs to the transcriptional regulatory CopG/NikR family. Ni(2+) serves as cofactor.

Its function is as follows. Transcriptional regulator. The sequence is that of Putative nickel-responsive regulator from Helicobacter acinonychis (strain Sheeba).